The sequence spans 323 residues: O-phosphoserine sulfhydrylase (323 aa).

The residue at position 51 (K51) is an N6-(pyridoxal phosphate)lysine. Pyridoxal 5'-phosphate contacts are provided by residues N81 and 184–188 (GTTGT). Residue R220 participates in substrate binding. Residue S265 coordinates pyridoxal 5'-phosphate.

This sequence belongs to the cysteine synthase/cystathionine beta-synthase family. In terms of assembly, homodimer. Pyridoxal 5'-phosphate is required as a cofactor.

It carries out the reaction [CysO sulfur-carrier protein]-C-terminal-Gly-aminoethanethioate + O-phospho-L-serine + H(+) = [CysO sulfur-carrier protein]-Gly-NH-CH2-C(O)-S-L-Cys + phosphate. It functions in the pathway amino-acid biosynthesis; L-cysteine biosynthesis. Its function is as follows. Catalyzes the formation of a covalent CysO-cysteine adduct via a sulfur transfer, using the thiocarboxylated sulfur carrier protein CysO-COSH as sulfur donor and O-phospho-L-serine (OPS) as sulfur acceptor. Can also use sodium sulfide as sulfur donor in vitro, albeit with less efficiency. The polypeptide is O-phosphoserine sulfhydrylase (cysM) (Mycobacterium bovis (strain ATCC BAA-935 / AF2122/97)).